Consider the following 624-residue polypeptide: Aliphatic sulfonate oxidoreductase, WOR-like subunit (624 aa).

Residues K77, S93, V94, S96, H195, A196, G198, and Y199 each contribute to the tungstopterin site. [4Fe-4S] cluster-binding residues include D299, C302, and C306. Positions 353, 357, 358, 359, 470, 490, 494, 495, and 496 each coordinate tungstopterin. C495 contributes to the [4Fe-4S] cluster binding site. A disordered region spans residues 552 to 575 (KDDDNPPRFYEPLPSGPVKGKAPN).

This sequence belongs to the AOR/FOR family. As to quaternary structure, heterodimer composed of a small WOR5-S subunit, with four [4Fe-4S] clusters, and a large WOR5-L subunit, containing the active site tungsto-bispyranopterin cofactor as well as another [4Fe-4S] cluster. [4Fe-4S] cluster is required as a cofactor. Tungstopterin serves as cofactor.

The protein resides in the cytoplasm. The catalysed reaction is an aliphatic sulfonate + 4 oxidized [4Fe-4S]-[ferredoxin] + 2 H2O = 4 reduced [4Fe-4S]-[ferredoxin] + a carboxylate + sulfite + 6 H(+). It catalyses the reaction an aliphatic sulfonate + 2 oxidized [4Fe-4S]-[ferredoxin] + H2O = 2 reduced [4Fe-4S]-[ferredoxin] + an aldehyde + sulfite + 3 H(+). The enzyme catalyses 2 oxidized [4Fe-4S]-[ferredoxin] + an aldehyde + H2O = 2 reduced [4Fe-4S]-[ferredoxin] + a carboxylate + 3 H(+). It carries out the reaction 4 oxidized [4Fe-4S]-[ferredoxin] + taurine + 2 H2O = 4 reduced [4Fe-4S]-[ferredoxin] + sulfite + glycine + 6 H(+). The catalysed reaction is 2 oxidized [4Fe-4S]-[ferredoxin] + taurine + H2O = aminoacetaldehyde + 2 reduced [4Fe-4S]-[ferredoxin] + sulfite + 3 H(+). It catalyses the reaction aminoacetaldehyde + 2 oxidized [4Fe-4S]-[ferredoxin] + H2O = 2 reduced [4Fe-4S]-[ferredoxin] + glycine + 3 H(+). Its function is as follows. WOR-like catalytic subunit of an oxidoreductase that can desulfonate and oxidize aliphatic sulfonates such as taurine. The activity involves two steps: an oxidative desulfonation reaction, followed by the activation of a second water molecule and oxidation of the resulting aldehyde. May be involved in the oxidation of various aliphatic sulfonates and also phosphonates. In vitro, has a broad substrate specificity with a high affinity for several substituted and nonsubstituted aliphatic and aromatic aldehydes with various chain lengths, with methyl viologen or benzyl viologen as electron acceptor. Ferredoxin is the physiological electron acceptor. This Pyrococcus furiosus (strain ATCC 43587 / DSM 3638 / JCM 8422 / Vc1) protein is Aliphatic sulfonate oxidoreductase, WOR-like subunit.